Reading from the N-terminus, the 484-residue chain is Protein arginine methyltransferase NDUFAF7 homolog, mitochondrial (484 aa).

Residues 1-12 (MFRSITQRVIRN) constitute a mitochondrion transit peptide.

Belongs to the NDUFAF7 family. As to quaternary structure, homodimer. Interacts with ndufs2.

The protein resides in the mitochondrion. It carries out the reaction L-arginyl-[protein] + 2 S-adenosyl-L-methionine = N(omega),N(omega)'-dimethyl-L-arginyl-[protein] + 2 S-adenosyl-L-homocysteine + 2 H(+). In terms of biological role, involved in the assembly or stability of mitochondrial NADH:ubiquinone oxidoreductase complex (complex I). Acts as an arginine methyltransferase and probably acts by mediating arginine methylation of ndufs2. This chain is Protein arginine methyltransferase NDUFAF7 homolog, mitochondrial, found in Dictyostelium discoideum (Social amoeba).